A 247-amino-acid polypeptide reads, in one-letter code: UPF0246 protein LSL_1719 (247 aa).

It belongs to the UPF0246 family.

The chain is UPF0246 protein LSL_1719 from Ligilactobacillus salivarius (strain UCC118) (Lactobacillus salivarius).